The chain runs to 381 residues: Cytochrome b (381 aa).

4 helical membrane-spanning segments follow: residues 34 to 54 (FGSL…FLAM), 78 to 99 (WLIR…YLHI), 114 to 134 (WNIG…GYVL), and 179 to 199 (FFAF…IHLL). Residues H84 and H98 each contribute to the heme b site. Heme b-binding residues include H183 and H197. H202 contacts a ubiquinone. 4 helical membrane passes run 227–247 (YKDL…ALFM), 289–309 (LGGV…PLLH), 321–341 (LTQI…WIGG), and 348–368 (FITV…IIMP).

This sequence belongs to the cytochrome b family. The cytochrome bc1 complex contains 3 respiratory subunits (MT-CYB, CYC1 and UQCRFS1), 2 core proteins (UQCRC1 and UQCRC2) and probably 6 low-molecular weight proteins. It depends on heme b as a cofactor.

The protein localises to the mitochondrion inner membrane. Its function is as follows. Component of the ubiquinol-cytochrome c reductase complex (complex III or cytochrome b-c1 complex) that is part of the mitochondrial respiratory chain. The b-c1 complex mediates electron transfer from ubiquinol to cytochrome c. Contributes to the generation of a proton gradient across the mitochondrial membrane that is then used for ATP synthesis. The chain is Cytochrome b (mt-cyb) from Sphyrna lewini (Scalloped hammerhead shark).